The chain runs to 150 residues: Large ribosomal subunit protein bL9 (150 aa).

Belongs to the bacterial ribosomal protein bL9 family.

Its function is as follows. Binds to the 23S rRNA. The sequence is that of Large ribosomal subunit protein bL9 from Pseudoalteromonas translucida (strain TAC 125).